The primary structure comprises 259 residues: Insulin-induced gene 1 protein (259 aa).

Over 1–66 the chain is Cytoplasmic; the sequence is MPRLHDHVWS…ARPGSWHHDL (66 aa). The interval 33–57 is disordered; sequence PQGPGAPEPEPAPRGQREGTAGFSA. The helical transmembrane segment at 67–89 threads the bilayer; sequence VQRSLVLFSFGVVLALVLNLLQI. Residues 90–108 are Extracellular-facing; that stretch reads QRNVTLFPDEVIATIFSSA. The helical transmembrane segment at 109-126 threads the bilayer; the sequence is WWVPPCCGTAAAVVGLLY. At 127 to 141 the chain is on the cytoplasmic side; sequence PCIDSHLGEPHKFKR. Glycyl lysine isopeptide (Lys-Gly) (interchain with G-Cter in ubiquitin) cross-links involve residues Lys-138 and Lys-140. The chain crosses the membrane as a helical span at residues 142 to 164; it reads EWASVMRCIAVFVGINHASAKLD. At 165-167 the chain is on the extracellular side; the sequence is FAN. A helical membrane pass occupies residues 168–186; it reads NVQLSLTLAALSLGLWWTF. Topologically, residues 187–191 are cytoplasmic; it reads DRSRS. Ser-189 bears the Phosphoserine mark. A helical transmembrane segment spans residues 192 to 213; the sequence is GLGLGITIAFLATLITQFLVYN. Residues 214–227 are Extracellular-facing; sequence GVYQYTSPDFLYIR. A helical membrane pass occupies residues 228-245; the sequence is SWLPCIFFSGGVTVGNIG. Topologically, residues 246-259 are cytoplasmic; sequence RQLAMGVPEKPHSD. A KxHxx motif is present at residues 253–259; the sequence is PEKPHSD.

It belongs to the INSIG family. Interacts with SCAP; interaction is direct and only takes place in the presence of sterols; it prevents interaction between SCAP and the coat protein complex II (COPII). Associates with the SCAP-SREBP complex (composed of SCAP and SREBF1/SREBP1 or SREBF2/SREBP2); association is mediated via its interaction with SCAP and only takes place in the presence of sterols. Interaction with SCAP is mutually exclusive with PAQR3. Interacts with HMGCR (via its SSD); the interaction, accelerated by sterols, leads to the recruitment of HMGCR to AMFR/gp78 for its ubiquitination by the sterol-mediated ERAD pathway. Interacts with AMFR/gp78 (via its membrane domain); the interaction recruits HMCR at the ER membrane for its ubiquitination and degradation by the sterol-mediated ERAD pathway. Interacts with SOAT2/ACAT2; leading to promote recruitment of AMFR/gp78 and subsequent ubiquitination of SOAT2/ACAT2. Interacts with RNF139. Interacts with RNF145. Post-translationally, phosphorylation at Ser-189 by PCK1 reduces binding to oxysterol, disrupting the interaction between INSIG1 and SCAP, thereby promoting nuclear translocation of SREBP proteins (SREBF1/SREBP1 or SREBF2/SREBP2) and subsequent transcription of downstream lipogenesis-related genes. In terms of processing, ubiquitinated by AMFR/gp78 in response to sterol deprivation, leading to its degradation: when the SCAP-SREBP complex becomes dissociated from INSIG1, INSIG1 is then ubiquitinated and degraded in proteasomes. Although ubiquitination is required for rapid INSIG1 degradation, it is not required for release of the SCAP-SREBP complex. Ubiquitinated by RNF139. As to expression, highly expressed in liver and kidney.

The protein resides in the endoplasmic reticulum membrane. Oxysterol-binding protein that mediates feedback control of cholesterol synthesis by controlling both endoplasmic reticulum to Golgi transport of SCAP and degradation of HMGCR. Acts as a negative regulator of cholesterol biosynthesis by mediating the retention of the SCAP-SREBP complex in the endoplasmic reticulum, thereby blocking the processing of sterol regulatory element-binding proteins (SREBPs) SREBF1/SREBP1 and SREBF2/SREBP2. Binds oxysterol, including 25-hydroxycholesterol, regulating interaction with SCAP and retention of the SCAP-SREBP complex in the endoplasmic reticulum. In presence of oxysterol, interacts with SCAP, retaining the SCAP-SREBP complex in the endoplasmic reticulum, thereby preventing SCAP from escorting SREBF1/SREBP1 and SREBF2/SREBP2 to the Golgi. Sterol deprivation or phosphorylation by PCK1 reduce oxysterol-binding, disrupting the interaction between INSIG1 and SCAP, thereby promoting Golgi transport of the SCAP-SREBP complex, followed by processing and nuclear translocation of SREBF1/SREBP1 and SREBF2/SREBP2. Also regulates cholesterol synthesis by regulating degradation of HMGCR: initiates the sterol-mediated ubiquitin-mediated endoplasmic reticulum-associated degradation (ERAD) of HMGCR via recruitment of the reductase to the ubiquitin ligases AMFR/gp78 and/or RNF139. Also regulates degradation of SOAT2/ACAT2 when the lipid levels are low: initiates the ubiquitin-mediated degradation of SOAT2/ACAT2 via recruitment of the ubiquitin ligases AMFR/gp78. The protein is Insulin-induced gene 1 protein of Rattus norvegicus (Rat).